We begin with the raw amino-acid sequence, 148 residues long: MSQLPFWQQKTLAEMSDSEWESLCDGCGQCCLNKLIDEDTDEIYFTNVACDQLNLKTCQCRNYERRFELEEDCIKLTRENLVTFEWLPPTCAYRLIGEGHDLPKWHPLLAGSKSAMHGERISVRHIAVRESEVIDWQDHILNKPQWAR.

This sequence belongs to the UPF0260 family.

This Yersinia enterocolitica serotype O:8 / biotype 1B (strain NCTC 13174 / 8081) protein is UPF0260 protein YE2365.